The chain runs to 197 residues: Imidazoleglycerol-phosphate dehydratase (197 aa).

The protein belongs to the imidazoleglycerol-phosphate dehydratase family.

Its subcellular location is the cytoplasm. It carries out the reaction D-erythro-1-(imidazol-4-yl)glycerol 3-phosphate = 3-(imidazol-4-yl)-2-oxopropyl phosphate + H2O. It functions in the pathway amino-acid biosynthesis; L-histidine biosynthesis; L-histidine from 5-phospho-alpha-D-ribose 1-diphosphate: step 6/9. The sequence is that of Imidazoleglycerol-phosphate dehydratase from Stutzerimonas stutzeri (strain A1501) (Pseudomonas stutzeri).